The chain runs to 326 residues: Transcription factor WRKY45-1 (326 aa).

2 disordered regions span residues 67–114 and 252–288; these read GGEG…SVVV and GVGSSDQEEVLSSLTPGSSAARGGGGGGGVAGPFGPD. A DNA-binding region (WRKY) is located at residues 112–180; that stretch reads VVVKNLDDGQ…YIGEHTCRDP (69 aa). The span at 273–283 shows a compositional bias: gly residues; the sequence is RGGGGGGGVAG.

Belongs to the WRKY group III family. Expressed in aleurone cells.

Its subcellular location is the nucleus. Functionally, transcriptional activator involved in defense responses against pathogens. Acts as a positive regulator of defense responses against the rice blast fungus Magnaporthe oryzae. Acts through W-boxes, which are cis-elements that are enriched in the promoters of several defense-related genes. Plays an important role in the benzothiadiazole-induced disease resistance by mediating salicylic acid (SA) defense signaling pathway, independently of the disease resistance gene NPR1/NH1. Acts as a negative regulator of defense responses against the bacterial blight Xanthomonas oryzae pv oryzae (Xoo) and the bacterial streak Xanthomonas oryzae pv oryzicola (Xoc). Acts downstream of abscisic acid (ABA) signaling in response to the rice blast fungus. ABA is a negative regulator of defense responses that interacts antagonistically with salicylic acid (SA) signaling pathway. Acts as a negative regulator of ABA signaling that suppresses growth of seedlings. Does not seem to be involved in the regulation of salt stress response. Acts as a negative regulator of cold stress response. Acts as a negative regulator of drought stress response. The polypeptide is Transcription factor WRKY45-1 (Oryza sativa subsp. japonica (Rice)).